Reading from the N-terminus, the 193-residue chain is MTEYLLLFVGTVLVNNFVLVKFLGLCPFMGVSKKLETAIGMGLATTFVLTLASVCAWMVNSFILLPLGLIYLRTLAFILVIAVVVQFTELVVRKTSPTLYRLLGIFLPLITTNCAVLGVALLNVNQSHNFMQSAVYGFSAAAGFSLVMVLFAAIRERLAVADVPAPFRRSSIALITAGLMSLAFMGFTGLVKF.

The next 6 helical transmembrane spans lie at 5-25 (LLLF…FLGL), 39-59 (IGMG…AWMV), 62-82 (FILL…LVIA), 102-122 (LLGI…VALL), 134-154 (AVYG…FAAI), and 171-191 (SIAL…TGLV).

Belongs to the NqrDE/RnfAE family. In terms of assembly, the complex is composed of six subunits: RnfA, RnfB, RnfC, RnfD, RnfE and RnfG.

Its subcellular location is the cell inner membrane. Functionally, part of a membrane-bound complex that couples electron transfer with translocation of ions across the membrane. This is Ion-translocating oxidoreductase complex subunit A from Yersinia pestis (strain Pestoides F).